Reading from the N-terminus, the 319-residue chain is HTH-type transcriptional regulator YidZ (319 aa).

The region spanning 8–65 is the HTH lysR-type domain; sequence LDLNLLLCLQLLMQERSVTKAAKRMNVTPSAVSKSLAKLRAWFDDPLFVNSPLGLSPT. The H-T-H motif DNA-binding region spans 25–44; sequence VTKAAKRMNVTPSAVSKSLA.

This sequence belongs to the LysR transcriptional regulatory family.

Involved in anaerobic NO protection. This chain is HTH-type transcriptional regulator YidZ, found in Escherichia coli O157:H7 (strain EC4115 / EHEC).